A 216-amino-acid chain; its full sequence is Probable GTP-binding protein EngB (216 aa).

An EngB-type G domain is found at 30-204; sequence DGLEVAFAGR…HDVLARWLGL (175 aa). GTP contacts are provided by residues 38 to 45, 64 to 68, 82 to 85, 149 to 152, and 182 to 185; these read GRSNAGKS, GRTQL, DLPG, TKAD, and LFSA. Mg(2+) is bound by residues serine 45 and threonine 66.

Belongs to the TRAFAC class TrmE-Era-EngA-EngB-Septin-like GTPase superfamily. EngB GTPase family. Mg(2+) serves as cofactor.

Its function is as follows. Necessary for normal cell division and for the maintenance of normal septation. This Azotobacter vinelandii (strain DJ / ATCC BAA-1303) protein is Probable GTP-binding protein EngB.